We begin with the raw amino-acid sequence, 370 residues long: Uroporphyrinogen decarboxylase (370 aa).

Substrate-binding positions include 29 to 33 (RQAGR), Asp-79, Tyr-155, Ser-210, and His-342.

This sequence belongs to the uroporphyrinogen decarboxylase family. As to quaternary structure, homodimer.

Its subcellular location is the cytoplasm. The enzyme catalyses uroporphyrinogen III + 4 H(+) = coproporphyrinogen III + 4 CO2. The protein operates within porphyrin-containing compound metabolism; protoporphyrin-IX biosynthesis; coproporphyrinogen-III from 5-aminolevulinate: step 4/4. Its function is as follows. Catalyzes the decarboxylation of four acetate groups of uroporphyrinogen-III to yield coproporphyrinogen-III. This is Uroporphyrinogen decarboxylase from Variovorax paradoxus (strain S110).